The primary structure comprises 346 residues: uncharacterized protein (346 aa).

8 helical membrane-spanning segments follow: residues 15–35, 55–75, 93–113, 139–159, 182–202, 229–249, 269–289, and 295–315; these read YLRG…LLTV, VEAR…YLFI, ILVL…EALT, ILLL…PLIL, IFTF…YCYV, LGVA…LLLL, LTNY…FHLF, and LQSL…SAMW.

This sequence to E.coli YeiB, B.subtilis YxaH and B.subtilis YrkO.

The protein resides in the cell membrane. Functionally, involved in transport. This is an uncharacterized protein from Bacillus acidopullulyticus.